The following is a 126-amino-acid chain: Class I hydrophobin 1 (126 aa).

A signal peptide spans 1–16; that stretch reads MQYMTIVAFLAATVAA. 4 disulfides stabilise this stretch: Cys-38–Cys-100, Cys-46–Cys-94, Cys-47–Cys-75, and Cys-101–Cys-119.

The protein belongs to the fungal hydrophobin family.

Its subcellular location is the secreted. The protein localises to the cell wall. Its function is as follows. Aerial growth, conidiation, and dispersal of filamentous fungi in the environment rely upon a capability of their secreting small amphipathic proteins called hydrophobins (HPBs) with low sequence identity. Class I can self-assemble into an outermost layer of rodlet bundles on aerial cell surfaces, conferring cellular hydrophobicity that supports fungal growth, development and dispersal; whereas Class II form highly ordered films at water-air interfaces through intermolecular interactions but contribute nothing to the rodlet structure. HYD1 and HYD2 are required for the structural integrity of the long aerial chains of microconidia. Does not seem to be important for the ability to cause seedling disease. The protein is Class I hydrophobin 1 of Gibberella moniliformis (Maize ear and stalk rot fungus).